A 470-amino-acid chain; its full sequence is Siroheme synthase (470 aa).

Positions 1 to 213 (MSDATDPGWF…GEHAAARQVL (213 aa)) are precorrin-2 dehydrogenase /sirohydrochlorin ferrochelatase. Residues 28–29 (GI) and 49–50 (PR) contribute to the NAD(+) site. Positions 224-470 (GEVWLVGAGP…VVTPPPLSGT (247 aa)) are uroporphyrinogen-III C-methyltransferase. Proline 233 lines the S-adenosyl-L-methionine pocket. Aspartate 256 functions as the Proton acceptor in the catalytic mechanism. Lysine 278 (proton donor) is an active-site residue. Residues 309–311 (GGD), isoleucine 314, 339–340 (TA), methionine 392, and glycine 421 each bind S-adenosyl-L-methionine.

The protein in the N-terminal section; belongs to the precorrin-2 dehydrogenase / sirohydrochlorin ferrochelatase family. This sequence in the C-terminal section; belongs to the precorrin methyltransferase family.

It catalyses the reaction uroporphyrinogen III + 2 S-adenosyl-L-methionine = precorrin-2 + 2 S-adenosyl-L-homocysteine + H(+). It carries out the reaction precorrin-2 + NAD(+) = sirohydrochlorin + NADH + 2 H(+). The catalysed reaction is siroheme + 2 H(+) = sirohydrochlorin + Fe(2+). Its pathway is cofactor biosynthesis; adenosylcobalamin biosynthesis; precorrin-2 from uroporphyrinogen III: step 1/1. It functions in the pathway cofactor biosynthesis; adenosylcobalamin biosynthesis; sirohydrochlorin from precorrin-2: step 1/1. The protein operates within porphyrin-containing compound metabolism; siroheme biosynthesis; precorrin-2 from uroporphyrinogen III: step 1/1. It participates in porphyrin-containing compound metabolism; siroheme biosynthesis; siroheme from sirohydrochlorin: step 1/1. Its pathway is porphyrin-containing compound metabolism; siroheme biosynthesis; sirohydrochlorin from precorrin-2: step 1/1. In terms of biological role, multifunctional enzyme that catalyzes the SAM-dependent methylations of uroporphyrinogen III at position C-2 and C-7 to form precorrin-2 via precorrin-1. Then it catalyzes the NAD-dependent ring dehydrogenation of precorrin-2 to yield sirohydrochlorin. Finally, it catalyzes the ferrochelation of sirohydrochlorin to yield siroheme. The chain is Siroheme synthase from Gluconacetobacter diazotrophicus (strain ATCC 49037 / DSM 5601 / CCUG 37298 / CIP 103539 / LMG 7603 / PAl5).